The following is a 314-amino-acid chain: Deoxyribonuclease-1-like 1 (314 aa).

The first 37 residues, 1-37 (MPFGQPGFLWRVPDAHIAMRGLVMAPLLILLVGGTEA), serve as a signal peptide directing secretion. An N-linked (GlcNAc...) asparagine glycan is attached at Asn-102. Glu-113 is an active-site residue. Residue Asn-133 is glycosylated (N-linked (GlcNAc...) asparagine). His-164 is an active-site residue. Cys-203 and Cys-240 are joined by a disulfide. An N-linked (GlcNAc...) asparagine glycan is attached at Asn-239.

It belongs to the DNase I family. As to expression, highly expressed in heart and skeletal muscles. Low expression in brain and thymus. Intermediated expression in other tissues.

The protein resides in the endoplasmic reticulum. The chain is Deoxyribonuclease-1-like 1 (Dnase1l1) from Mus musculus (Mouse).